We begin with the raw amino-acid sequence, 236 residues long: Small ribosomal subunit protein uS2c (236 aa).

It belongs to the universal ribosomal protein uS2 family.

Its subcellular location is the plastid. It is found in the chloroplast. This chain is Small ribosomal subunit protein uS2c (rps2), found in Oryza sativa (Rice).